We begin with the raw amino-acid sequence, 32 residues long: Photosystem II reaction center protein Z (32 aa).

The chain crosses the membrane as a helical span at residues 12 to 32 (FGAAAWIGLVLLVGTLYYFVV).

The protein belongs to the PsbZ family. As to quaternary structure, PSII is composed of 1 copy each of membrane proteins PsbA, PsbB, PsbC, PsbD, PsbE, PsbF, PsbH, PsbI, PsbJ, PsbK, PsbL, PsbM, PsbT, PsbY, PsbZ, Psb30/Ycf12, at least 3 peripheral proteins of the oxygen-evolving complex and a large number of cofactors. It forms dimeric complexes.

Its subcellular location is the plastid. The protein localises to the chloroplast thylakoid membrane. May control the interaction of photosystem II (PSII) cores with the light-harvesting antenna, regulates electron flow through the 2 photosystem reaction centers. PSII is a light-driven water plastoquinone oxidoreductase, using light energy to abstract electrons from H(2)O, generating a proton gradient subsequently used for ATP formation. This Euglena granulata protein is Photosystem II reaction center protein Z.